The following is a 114-amino-acid chain: Iron-sulfur cluster insertion protein ErpA (114 aa).

Iron-sulfur cluster is bound by residues Cys42, Cys106, and Cys108.

This sequence belongs to the HesB/IscA family. In terms of assembly, homodimer. Iron-sulfur cluster is required as a cofactor.

In terms of biological role, required for insertion of 4Fe-4S clusters for at least IspG. In Haemophilus influenzae (strain PittEE), this protein is Iron-sulfur cluster insertion protein ErpA.